The sequence spans 359 residues: Peptide chain release factor 1 (359 aa).

Residue Q236 is modified to N5-methylglutamine.

It belongs to the prokaryotic/mitochondrial release factor family. Methylated by PrmC. Methylation increases the termination efficiency of RF1.

The protein resides in the cytoplasm. Functionally, peptide chain release factor 1 directs the termination of translation in response to the peptide chain termination codons UAG and UAA. This Streptococcus pyogenes serotype M3 (strain ATCC BAA-595 / MGAS315) protein is Peptide chain release factor 1.